The sequence spans 792 residues: Probable phosphoketolase (792 aa).

The protein belongs to the XFP family. It depends on thiamine diphosphate as a cofactor.

The polypeptide is Probable phosphoketolase (Brucella melitensis biotype 1 (strain ATCC 23456 / CCUG 17765 / NCTC 10094 / 16M)).